The sequence spans 148 residues: Large ribosomal subunit protein bL9 (148 aa).

This sequence belongs to the bacterial ribosomal protein bL9 family.

In terms of biological role, binds to the 23S rRNA. In Acetivibrio thermocellus (strain ATCC 27405 / DSM 1237 / JCM 9322 / NBRC 103400 / NCIMB 10682 / NRRL B-4536 / VPI 7372) (Clostridium thermocellum), this protein is Large ribosomal subunit protein bL9.